The following is a 201-amino-acid chain: Small ribosomal subunit protein uS10m (201 aa).

Belongs to the universal ribosomal protein uS10 family. In terms of assembly, component of the mitochondrial ribosome small subunit (28S) which comprises a 12S rRNA and about 30 distinct proteins.

Its subcellular location is the mitochondrion. The protein is Small ribosomal subunit protein uS10m (MRPS10) of Pongo abelii (Sumatran orangutan).